We begin with the raw amino-acid sequence, 181 residues long: ADP-ribosylation factor 3 (181 aa).

The N-myristoyl glycine moiety is linked to residue Gly-2. Residues Gly-24–Thr-31, Asp-67–Gln-71, and Asn-126–Asp-129 contribute to the GTP site.

The protein belongs to the small GTPase superfamily. Arf family. As to quaternary structure, interacts with PRKCABP. Interacts with PI4KB and NCS1/FREQ at the Golgi complex.

The protein localises to the golgi apparatus. It is found in the cytoplasm. The protein resides in the perinuclear region. GTP-binding protein that functions as an allosteric activator of the cholera toxin catalytic subunit, an ADP-ribosyltransferase. Involved in protein trafficking; may modulate vesicle budding and uncoating within the Golgi apparatus. The chain is ADP-ribosylation factor 3 (ARF3) from Bos taurus (Bovine).